We begin with the raw amino-acid sequence, 78 residues long: Protein Class8-like (78 aa).

A signal peptide spans 1–19 (MRTLVVLLIGAVLLCSANA). Residues 20–36 (FLDELLAESVNDMTDKR) constitute a propeptide that is removed on maturation. The 41-residue stretch at 38 to 78 (CFDKYKSNICGGVISPAHCVRRSGRMAKFAKENCAHFCGFC) folds into the ShKT domain. Intrachain disulfides connect C38–C78, C47–C71, and C56–C75.

As to expression, expressed in ganglion neurons residing in the mesoglea (observed in both planulae and primary polyps). Not expressed in nematocytes.

In terms of biological role, probable neuropeptide. The chain is Protein Class8-like from Nematostella vectensis (Starlet sea anemone).